Consider the following 447-residue polypeptide: Asparagine--tRNA ligase (447 aa).

Belongs to the class-II aminoacyl-tRNA synthetase family. Homodimer.

It is found in the cytoplasm. The catalysed reaction is tRNA(Asn) + L-asparagine + ATP = L-asparaginyl-tRNA(Asn) + AMP + diphosphate + H(+). This Lactococcus lactis subsp. cremoris (strain SK11) protein is Asparagine--tRNA ligase.